Consider the following 270-residue polypeptide: tRNA pseudouridine synthase A (270 aa).

Residue aspartate 51 is the Nucleophile of the active site. Residue tyrosine 109 coordinates substrate.

The protein belongs to the tRNA pseudouridine synthase TruA family. Homodimer.

The enzyme catalyses uridine(38/39/40) in tRNA = pseudouridine(38/39/40) in tRNA. Formation of pseudouridine at positions 38, 39 and 40 in the anticodon stem and loop of transfer RNAs. This is tRNA pseudouridine synthase A from Burkholderia orbicola (strain MC0-3).